A 305-amino-acid chain; its full sequence is Orotidine 5'-phosphate decarboxylase (305 aa).

The Proton donor role is filled by K108.

This sequence belongs to the OMP decarboxylase family. Type 2 subfamily.

It catalyses the reaction orotidine 5'-phosphate + H(+) = UMP + CO2. It functions in the pathway pyrimidine metabolism; UMP biosynthesis via de novo pathway; UMP from orotate: step 2/2. The polypeptide is Orotidine 5'-phosphate decarboxylase (Caldicellulosiruptor saccharolyticus (strain ATCC 43494 / DSM 8903 / Tp8T 6331)).